The chain runs to 1704 residues: Phospholipid-transporting ATPase ABCA3 (1704 aa).

Residue Asn14 is glycosylated (N-linked (GlcNAc...) asparagine). The helical transmembrane segment at 22–42 (VLVTVLELFLPLLFSGILIWL) threads the bilayer. Asn53, Asn124, and Asn140 each carry an N-linked (GlcNAc...) asparagine glycan. A run of 6 helical transmembrane segments spans residues 261–283 (YQLPLLLLLSFTYTALTIARAVV), 307–327 (AWFLLFFLFLLIAASFMTLLF), 344–364 (SLVLAFLLCFAISTISFSFMV), 373–393 (MAAAFGGFLYFFTYIPYFFVA), 405–425 (LCSCLLSNVAMAMGAQLIGKF), and 447–467 (FCFGQVLGMLLLDSVLYGLVT). The region spanning 530–763 (IKIKHLSKVF…YGAGYHMTLV (234 aa)) is the ABC transporter 1 domain. Position 566–573 (566–573 (GHNGAGKT)) interacts with ATP. 2 N-linked (GlcNAc...) asparagine glycosylation sites follow: Asn620 and Asn783. Transmembrane regions (helical) follow at residues 925-945 (MVAAQVLVPLTCVTLALLAIN), 1100-1120 (IALNLLFAMAFLASTFSILAV), 1144-1164 (SALLWDLISFLIPSLLLLVVF), 1183-1203 (LLLLLYGWAIIPLMYLMNFFF), 1213-1233 (LTIFNILSGIATFLMVTIMRI), 1245-1265 (LDHVFLVLPNHCLGMAVSSFY), and 1306-1326 (FVASMAASGCAYLILLFLIET). Positions 1381 to 1614 (LIIKELSKVY…FGSGYSLRAK (234 aa)) constitute an ABC transporter 2 domain. 1416-1423 (GFNGAGKT) serves as a coordination point for ATP.

The protein belongs to the ABC transporter superfamily. ABCA family. Homooligomer; disulfide-linked. Post-translationally, N-glycosylated. Localization at intracellular vesicles is accompanied by processing of oligosaccharide from high mannose type to complex type. N-linked glycosylation at Asn-124 and Asn-140 is required for stability and efficient anterograde trafficking and prevents from proteasomal degradation. Proteolytically cleaved by CTSL and to a lower extent by CTSB within multivesicular bodies (MVB) and lamellar bodies (LB) leading to a mature form of 150 kDa. Expressed in brain, pancreas, skeletal muscle and heart. Highly expressed in the lung in an AT2-cell-specific manner. Weakly expressed in placenta, kidney and liver. Also expressed in medullary thyroid carcinoma cells (MTC) and in C-cell carcinoma.

The protein resides in the endosome. Its subcellular location is the multivesicular body membrane. It is found in the cytoplasmic vesicle membrane. It localises to the late endosome membrane. The protein localises to the lysosome membrane. The catalysed reaction is ATP + H2O + xenobioticSide 1 = ADP + phosphate + xenobioticSide 2.. It carries out the reaction a 1,2-diacyl-sn-glycero-3-phosphocholine(in) + ATP + H2O = a 1,2-diacyl-sn-glycero-3-phosphocholine(out) + ADP + phosphate + H(+). It catalyses the reaction ATP + H2O + phospholipidSide 1 = ADP + phosphate + phospholipidSide 2.. The enzyme catalyses 1,2-dihexadecanoyl-sn-glycero-3-phosphocholine(in) + ATP + H2O = 1,2-dihexadecanoyl-sn-glycero-3-phosphocholine(out) + ADP + phosphate + H(+). The catalysed reaction is cholesterol(in) + ATP + H2O = cholesterol(out) + ADP + phosphate + H(+). It carries out the reaction a 1,2-diacyl-sn-glycero-3-phospho-(1'-sn-glycerol)(in) + ATP + H2O = a 1,2-diacyl-sn-glycero-3-phospho-(1'-sn-glycerol)(out) + ADP + phosphate + H(+). With respect to regulation, the ATP-dependent phosphatidylcholine transport is competitively inhibited by miltefosine. Its function is as follows. Catalyzes the ATP-dependent transport of phospholipids such as phosphatidylcholine and phosphoglycerol from the cytoplasm into the lumen side of lamellar bodies, in turn participates in the lamellar bodies biogenesis and homeostasis of pulmonary surfactant. Transports preferentially phosphatidylcholine containing short acyl chains. In addition plays a role as an efflux transporter of miltefosine across macrophage membranes and free cholesterol (FC) through intralumenal vesicles by removing FC from the cell as a component of surfactant and protects cells from free cholesterol toxicity. This is Phospholipid-transporting ATPase ABCA3 from Homo sapiens (Human).